An 88-amino-acid chain; its full sequence is MKTILLLLVRAYQLGISPFLGQNCRFYPSCSAYAFEAIGEYGALKGSFLATKRLCKCHPWHPGGVDPVPKKSSSKKTSSTTACGCGHS.

Residues 64 to 88 (GVDPVPKKSSSKKTSSTTACGCGHS) are disordered.

It belongs to the UPF0161 family.

It is found in the cell inner membrane. Could be involved in insertion of integral membrane proteins into the membrane. In Herminiimonas arsenicoxydans, this protein is Putative membrane protein insertion efficiency factor.